The chain runs to 663 residues: Bicarbonate transport ATP-binding protein CmpC (663 aa).

The region spanning 5–239 (VAVENIEKSF…RPRKRMDVVH (235 aa)) is the ABC transporter domain. 42 to 49 (GHSGCGKS) contributes to the ATP binding site. Positions 281–663 (LEIGYVPLMA…LDQPRPIAAA (383 aa)) are cmpA-like.

Belongs to the ABC transporter superfamily. Nitrate/nitrite/cyanate uptake transporter (NitT) (TC 3.A.1.16) family. As to quaternary structure, the complex is composed of two ATP-binding proteins (CmpC and CmpD), a transmembrane protein (CmpB) and a solute-binding protein (CmpA).

The protein resides in the cell inner membrane. Functionally, part of the ABC transporter complex CmpABCD involved in bicarbonate transport. Responsible for energy coupling to the transport system. The chain is Bicarbonate transport ATP-binding protein CmpC (cmpC) from Synechococcus elongatus (strain ATCC 33912 / PCC 7942 / FACHB-805) (Anacystis nidulans R2).